The following is a 307-amino-acid chain: Acyl transferase (307 aa).

Catalysis depends on charge relay system residues Ser-116, Asp-213, and His-243.

This sequence belongs to the LuxD family.

The protein operates within lipid metabolism; fatty acid reduction for biolumincescence. Its function is as follows. Acyl transferase is part of the fatty acid reductase system required for aldehyde biosynthesis; it produces fatty acids for the luminescent reaction. This chain is Acyl transferase, found in Photorhabdus luminescens (Xenorhabdus luminescens).